Consider the following 436-residue polypeptide: 3-ketoacyl-CoA thiolase (436 aa).

Residue cysteine 99 is the Acyl-thioester intermediate of the active site. Residues histidine 392 and cysteine 422 each act as proton acceptor in the active site.

It belongs to the thiolase-like superfamily. Thiolase family. As to quaternary structure, heterotetramer of two alpha chains (FadJ) and two beta chains (FadI).

It is found in the cytoplasm. The catalysed reaction is an acyl-CoA + acetyl-CoA = a 3-oxoacyl-CoA + CoA. It participates in lipid metabolism; fatty acid beta-oxidation. Functionally, catalyzes the final step of fatty acid oxidation in which acetyl-CoA is released and the CoA ester of a fatty acid two carbons shorter is formed. The chain is 3-ketoacyl-CoA thiolase from Escherichia coli O127:H6 (strain E2348/69 / EPEC).